The following is a 503-amino-acid chain: ATP synthase subunit alpha (503 aa).

169–176 (GDRKTGKT) is an ATP binding site.

The protein belongs to the ATPase alpha/beta chains family. F-type ATPases have 2 components, CF(1) - the catalytic core - and CF(0) - the membrane proton channel. CF(1) has five subunits: alpha(3), beta(3), gamma(1), delta(1), epsilon(1). CF(0) has three main subunits: a(1), b(2) and c(9-12). The alpha and beta chains form an alternating ring which encloses part of the gamma chain. CF(1) is attached to CF(0) by a central stalk formed by the gamma and epsilon chains, while a peripheral stalk is formed by the delta and b chains.

The protein resides in the cell membrane. The catalysed reaction is ATP + H2O + 4 H(+)(in) = ADP + phosphate + 5 H(+)(out). Its function is as follows. Produces ATP from ADP in the presence of a proton gradient across the membrane. The alpha chain is a regulatory subunit. The protein is ATP synthase subunit alpha of Lactobacillus helveticus (strain DPC 4571).